The chain runs to 70 residues: Small ribosomal subunit protein bS21 (70 aa).

It belongs to the bacterial ribosomal protein bS21 family.

This chain is Small ribosomal subunit protein bS21, found in Azoarcus sp. (strain BH72).